The following is a 172-amino-acid chain: Adenine phosphoribosyltransferase (172 aa).

This sequence belongs to the purine/pyrimidine phosphoribosyltransferase family. In terms of assembly, homodimer.

It localises to the cytoplasm. It catalyses the reaction AMP + diphosphate = 5-phospho-alpha-D-ribose 1-diphosphate + adenine. Its pathway is purine metabolism; AMP biosynthesis via salvage pathway; AMP from adenine: step 1/1. Functionally, catalyzes a salvage reaction resulting in the formation of AMP, that is energically less costly than de novo synthesis. This chain is Adenine phosphoribosyltransferase, found in Prochlorococcus marinus (strain NATL2A).